The chain runs to 893 residues: Protein translocase subunit SecA (893 aa).

ATP is bound by residues glutamine 87, 105–109 (GEGKT), and aspartate 512. Over residues 840–849 (VEEQHRKSEE) the composition is skewed to basic and acidic residues. The disordered stretch occupies residues 840–893 (VEEQHRKSEEVPMDFQHQSASSPSEQAQTPRVGRNEPCPCGSGKKYKQCHGKLA). Residues 855–868 (QHQSASSPSEQAQT) are compositionally biased toward polar residues. Residues cysteine 877, cysteine 879, cysteine 888, and histidine 889 each coordinate Zn(2+). Residues 883–893 (KKYKQCHGKLA) are compositionally biased toward basic residues.

Belongs to the SecA family. Monomer and homodimer. Part of the essential Sec protein translocation apparatus which comprises SecA, SecYEG and auxiliary proteins SecDF-YajC and YidC. The cofactor is Zn(2+).

Its subcellular location is the cell inner membrane. The protein resides in the cytoplasm. The enzyme catalyses ATP + H2O + cellular proteinSide 1 = ADP + phosphate + cellular proteinSide 2.. In terms of biological role, part of the Sec protein translocase complex. Interacts with the SecYEG preprotein conducting channel. Has a central role in coupling the hydrolysis of ATP to the transfer of proteins into and across the cell membrane, serving both as a receptor for the preprotein-SecB complex and as an ATP-driven molecular motor driving the stepwise translocation of polypeptide chains across the membrane. In Colwellia psychrerythraea (strain 34H / ATCC BAA-681) (Vibrio psychroerythus), this protein is Protein translocase subunit SecA.